The chain runs to 373 residues: Muconate cycloisomerase 1 (373 aa).

Lys-169 is an active-site residue. Lys-169 acts as the Proton acceptor in catalysis. Mn(2+) contacts are provided by Asp-198, Glu-224, and Asp-249. Catalysis depends on Glu-327, which acts as the Proton donor.

This sequence belongs to the mandelate racemase/muconate lactonizing enzyme family. The cofactor is Mn(2+).

The enzyme catalyses (S)-muconolactone = cis,cis-muconate + H(+). This is Muconate cycloisomerase 1 (catB) from Rhodococcus opacus (Nocardia opaca).